The sequence spans 185 residues: NEDD8-conjugating enzyme UBE2F (185 aa).

An interaction with uba3 region spans residues 1-29 (MLTLASKLKREEGVRAGRTPAGSNDAAHR). The UBC core domain occupies 32–185 (IRDRLLIKEV…VQDFIKNYAR (154 aa)). Cysteine 116 serves as the catalytic Glycyl thioester intermediate.

Belongs to the ubiquitin-conjugating enzyme family. UBE2F subfamily.

It catalyses the reaction [E1 NEDD8-activating enzyme]-S-[NEDD8 protein]-yl-L-cysteine + [E2 NEDD8-conjugating enzyme]-L-cysteine = [E1 NEDD8-activating enzyme]-L-cysteine + [E2 NEDD8-conjugating enzyme]-S-[NEDD8-protein]-yl-L-cysteine.. It participates in protein modification; protein neddylation. Its function is as follows. Accepts the ubiquitin-like protein NEDD8 from the UBA3-NAE1 E1 complex and catalyzes its covalent attachment to other proteins. Together with the E3 ubiquitin ligase rnf7/rbx2, specifically neddylates cullin-5 (cul5). Does not neddylate cul1, cul2, cul3, cul4a or cul4b. The protein is NEDD8-conjugating enzyme UBE2F (ube2f) of Danio rerio (Zebrafish).